Consider the following 351-residue polypeptide: Biotin synthase (351 aa).

Residues 48–265 (NKVRIHILDN…LCMFRLINPD (218 aa)) enclose the Radical SAM core domain. [4Fe-4S] cluster contacts are provided by C63, C67, and C70. C107, C139, C199, and R269 together coordinate [2Fe-2S] cluster.

The protein belongs to the radical SAM superfamily. Biotin synthase family. Homodimer. Requires [4Fe-4S] cluster as cofactor. The cofactor is [2Fe-2S] cluster.

It catalyses the reaction (4R,5S)-dethiobiotin + (sulfur carrier)-SH + 2 reduced [2Fe-2S]-[ferredoxin] + 2 S-adenosyl-L-methionine = (sulfur carrier)-H + biotin + 2 5'-deoxyadenosine + 2 L-methionine + 2 oxidized [2Fe-2S]-[ferredoxin]. Its pathway is cofactor biosynthesis; biotin biosynthesis; biotin from 7,8-diaminononanoate: step 2/2. Functionally, catalyzes the conversion of dethiobiotin (DTB) to biotin by the insertion of a sulfur atom into dethiobiotin via a radical-based mechanism. In Leptospira interrogans serogroup Icterohaemorrhagiae serovar Lai (strain 56601), this protein is Biotin synthase.